A 72-amino-acid polypeptide reads, in one-letter code: Translation initiation factor IF-1 (72 aa).

The S1-like domain maps to 1-72 (MAKEDNFELE…SKGRITYRAR (72 aa)).

It belongs to the IF-1 family. In terms of assembly, component of the 30S ribosomal translation pre-initiation complex which assembles on the 30S ribosome in the order IF-2 and IF-3, IF-1 and N-formylmethionyl-tRNA(fMet); mRNA recruitment can occur at any time during PIC assembly.

The protein resides in the cytoplasm. In terms of biological role, one of the essential components for the initiation of protein synthesis. Stabilizes the binding of IF-2 and IF-3 on the 30S subunit to which N-formylmethionyl-tRNA(fMet) subsequently binds. Helps modulate mRNA selection, yielding the 30S pre-initiation complex (PIC). Upon addition of the 50S ribosomal subunit IF-1, IF-2 and IF-3 are released leaving the mature 70S translation initiation complex. This chain is Translation initiation factor IF-1, found in Saccharophagus degradans (strain 2-40 / ATCC 43961 / DSM 17024).